We begin with the raw amino-acid sequence, 459 residues long: Paired box protein Pax-8 (459 aa).

Positions 9–135 (GHGGLNQLGG…SSINRIIRTK (127 aa)) form a DNA-binding region, paired. The PAI subdomain stretch occupies residues 12-68 (GLNQLGGAFVNGRPLPEVVRQRIVDLAHQGVRPCDISRQLRVSHGCVSKILGRYYET). The RED subdomain stretch occupies residues 87–135 (KVVEKIGDYKRQNPTMFAWEIRDRLLAEGVCDNDTVPSVSSINRIIRTK). Over residues 159 to 182 (LIPSSAVTPPESPQSDSLGSTYSI) the composition is skewed to polar residues. Residues 159 to 223 (LIPSSAVTPP…QSSSSGPRKH (65 aa)) form a disordered region. A Phosphoserine modification is found at Ser305.

As to quaternary structure, interacts with WWTR1.

It is found in the nucleus. Thought to encode a transcription factor. It may have a role in kidney cell differentiation. May play a regulatory role in mammalian development. The sequence is that of Paired box protein Pax-8 (PAX8) from Canis lupus familiaris (Dog).